Reading from the N-terminus, the 226-residue chain is tRNA (guanine-N(7)-)-methyltransferase (226 aa).

Residues Asp-59, Glu-84, and Asp-111 each coordinate S-adenosyl-L-methionine. Asp-169 is a substrate binding site.

This sequence belongs to the class I-like SAM-binding methyltransferase superfamily. TrmB family.

The catalysed reaction is guanosine(46) in tRNA + S-adenosyl-L-methionine = N(7)-methylguanosine(46) in tRNA + S-adenosyl-L-homocysteine. Its pathway is tRNA modification; N(7)-methylguanine-tRNA biosynthesis. Its function is as follows. Catalyzes the formation of N(7)-methylguanine at position 46 (m7G46) in tRNA. The protein is tRNA (guanine-N(7)-)-methyltransferase of Chloroherpeton thalassium (strain ATCC 35110 / GB-78).